The chain runs to 182 residues: MSKQHTAQAPVDPIVLGKMGSSYGIRGWLRVFSSTEDAESIFDYQPWLIQKAGQWQVVELESWRHHNQDIIIKLKGVDDRDAANLLTNCEIIVDSSQLPELEEGDYYWKDLMGCQVVTTEGYSLGKVIDMMETGSNDVLVIKANLKDAFGIKERLVPFLDGQVIKKVDLTTRTIEVDWDPGF.

Positions 103–182 (EGDYYWKDLM…TIEVDWDPGF (80 aa)) constitute a PRC barrel domain.

It belongs to the RimM family. As to quaternary structure, binds ribosomal protein uS19.

The protein localises to the cytoplasm. Functionally, an accessory protein needed during the final step in the assembly of 30S ribosomal subunit, possibly for assembly of the head region. Essential for efficient processing of 16S rRNA. May be needed both before and after RbfA during the maturation of 16S rRNA. It has affinity for free ribosomal 30S subunits but not for 70S ribosomes. The polypeptide is Ribosome maturation factor RimM (Klebsiella pneumoniae subsp. pneumoniae (strain ATCC 700721 / MGH 78578)).